The sequence spans 233 residues: MANESEIQKTENAEVANAANGTNPNNERRGRGGRGRGGRGRDGRGRRDDRRNEEAGEELIEKLVHINRVSKTVKGGKRFGFAALVVVGDGKGRVGFGHGKAREVPEAISKATAAAKKTMIRVPLREGRTLHHDGRGRFGAGLVYLRSAPSGTGIIAGGPMRAIFESLGVADVVTKSVGTSNPYNMIRATFEALNDQKSPKAVAQRRGKRIADLFGRGGASAAKAEAEAAAVVE.

2 stretches are compositionally biased toward basic and acidic residues: residues 1–12 (MANESEIQKTEN) and 39–54 (RGRD…RNEE). The tract at residues 1 to 54 (MANESEIQKTENAEVANAANGTNPNNERRGRGGRGRGGRGRDGRGRRDDRRNEE) is disordered. In terms of domain architecture, S5 DRBM spans 59-122 (LIEKLVHINR…AAAKKTMIRV (64 aa)).

This sequence belongs to the universal ribosomal protein uS5 family. As to quaternary structure, part of the 30S ribosomal subunit. Contacts proteins S4 and S8.

Functionally, with S4 and S12 plays an important role in translational accuracy. Located at the back of the 30S subunit body where it stabilizes the conformation of the head with respect to the body. This is Small ribosomal subunit protein uS5 from Zymomonas mobilis subsp. mobilis (strain ATCC 31821 / ZM4 / CP4).